The chain runs to 534 residues: MATGLQVPLPWLATGLLLLLSVQPWAESGKVLVVPIDGSHWLSMREVLRELHARGHQAVVLTPEVNMHIKEENFFTLTTYAISWTQDEFDRHVLGHTQLYFETEHFLKKFFRSMAMLNNMSLVYHRSCVELLHNEALIRHLNATSFDVVLTDPVNLCAAVLAKYLSIPTVFFLRNIPCDLDFKGTQCPNPSSYIPRLLTTNSDHMTFMQRVKNMLYPLALSYICHAFSAPYASLASELFQREVSVVDILSHASVWLFRGDFVMDYPRPIMPNMVFIGGINCANRKPLSQEFEAYINASGEHGIVVFSLGSMVSEIPEKKAMAIADALGKIPQTVLWRYTGTRPSNLANNTILVKWLPQNDLLGHPMTRAFITHAGSHGVYESICNGVPMVMMPLFGDQMDNAKRMETKGAGVTLNVLEMTSEDLENALKAVINDKSYKENIMRLSSLHKDRPVEPLDLAVFWVEFVMRHKGAPHLRPAAHDLTWYQYHSLDVIGFLLAVVLTVAFITFKCCAYGYRKCLGKKGRVKKAHKSKTH.

Residues 1-28 (MATGLQVPLPWLATGLLLLLSVQPWAES) form the signal peptide. Residues Asn119, Asn142, Asn296, and Asn348 are each glycosylated (N-linked (GlcNAc...) asparagine). The helical transmembrane segment at 492–508 (VIGFLLAVVLTVAFITF) threads the bilayer.

Belongs to the UDP-glycosyltransferase family. In terms of assembly, homodimer. Homooligomer. Interacts with UGT1A1, UGT1A4, UGT1A6, UGT1A7, UGT1A8, UGT1A9 and UGT1A10 to form heterodimers. Isoform 1 interacts with isoform 2/i2 suggesting that oligomerization is involved in negative regulation of transferase activity by isoform 2. Isoform 1 also interacts with respective i2 isoforms of UGT1A1, UGT1A4, UGT1A6, UGT1A7, UGT1A8, UGT1A9 and UGT1A10. As to expression, expressed in liver, kidney, colon, esophagus and small intestine. In terms of tissue distribution, expressed in liver, kidney and colon. Not expressed in esophagus and small intestine.

The protein localises to the endoplasmic reticulum membrane. The catalysed reaction is glucuronate acceptor + UDP-alpha-D-glucuronate = acceptor beta-D-glucuronoside + UDP + H(+). It carries out the reaction 17beta-estradiol + UDP-alpha-D-glucuronate = 17beta-estradiol 3-O-(beta-D-glucuronate) + UDP + H(+). The enzyme catalyses 17beta-estradiol + UDP-alpha-D-glucuronate = 17beta-estradiol 17-O-(beta-D-glucuronate) + UDP + H(+). It catalyses the reaction 17alpha-estradiol + UDP-alpha-D-glucuronate = 17alpha-estradiol 3-O-(beta-D-glucuronate) + UDP + H(+). The catalysed reaction is estrone + UDP-alpha-D-glucuronate = estrone 3-O-(beta-D-glucuronate) + UDP + H(+). It carries out the reaction chenodeoxycholate + UDP-alpha-D-glucuronate = chenodeoxycholoyl-24-O-(beta-D-glucuronate) + UDP. The enzyme catalyses deoxycholate + UDP-alpha-D-glucuronate = deoxycholoyl-24-O-(beta-D-glucuronate) + UDP. It catalyses the reaction lithocholate + UDP-alpha-D-glucuronate = lithocholoyl-24-O-(beta-D-glucuronate) + UDP. The catalysed reaction is hyodeoxycholate + UDP-alpha-D-glucuronate = hyodeoxycholoyl-24-O-(beta-D-glucuronate) + UDP. It carries out the reaction hyocholate + UDP-alpha-D-glucuronate = hyocholoyl-24-O-(beta-D-glucuronate) + UDP. The enzyme catalyses calcidiol + UDP-alpha-D-glucuronate = calcidiol 25-O-(beta-D-glucuronide) + UDP + H(+). It catalyses the reaction (E)-ferulate + UDP-alpha-D-glucuronate = (E)-4-O-(beta-D-glucuronosyl)-ferulate + UDP + H(+). The catalysed reaction is (E)-ferulate + UDP-alpha-D-glucuronate = (E)-ferulic acid beta-D-glucuronate ester + UDP. It carries out the reaction losartan + UDP-alpha-D-glucuronate = losartan-2-N-beta-D-glucuronide + UDP. The enzyme catalyses candesartan + UDP-alpha-D-glucuronate = candesartan-2-N-beta-D-glucuronide + UDP. It catalyses the reaction zolasartan + UDP-alpha-D-glucuronate = zolarsartan-2-N-beta-D-glucuronide + UDP. In terms of biological role, UDP-glucuronosyltransferase (UGT) that catalyzes phase II biotransformation reactions in which lipophilic substrates are conjugated with glucuronic acid to increase the metabolite's water solubility, thereby facilitating excretion into either the urine or bile. Essential for the elimination and detoxification of drugs, xenobiotics and endogenous compounds. Catalyzes the glucuronidation of endogenous estrogen hormones such as estradiol and estrone. Contributes to bile acid (BA) detoxification by catalyzing the glucuronidation of BA substrates, which are natural detergents for dietary lipids absorption. Involved in the glucuronidation of calcidiol, which is the major circulating form of vitamin D3, essential for the regulation of calcium and phosphate homeostasis. Involved in the glucuronidation of the phytochemical ferulic acid at the phenolic or the carboxylic acid group. Involved in the glucuronidation of the AGTR1 angiotensin receptor antagonists losartan, candesartan and zolarsartan, which can inhibit the effect of angiotensin II. Its function is as follows. Lacks UDP-glucuronosyltransferase (UGT) activity but acts as a negative regulator of isoform 1. This is UDP-glucuronosyltransferase 1A3 from Homo sapiens (Human).